Consider the following 392-residue polypeptide: Acetyl-CoA acetyltransferase (392 aa).

Cys-85 (acyl-thioester intermediate) is an active-site residue. Cys-206, Ser-207, Val-209, and Lys-332 together coordinate CoA. The Proton acceptor role is filled by His-336.

Belongs to the thiolase-like superfamily. Thiolase family. In terms of assembly, interacts with HMG-CoA synthase (HMGCS) that catalyzes the second step in the pathway and with a DUF35 protein. The acetoacetyl-CoA thiolase/HMG-CoA synthase complex channels the intermediate via a fused CoA-binding site, which allows for efficient coupling of the endergonic thiolase reaction with the exergonic HMGCS reaction.

It carries out the reaction 2 acetyl-CoA = acetoacetyl-CoA + CoA. Its pathway is metabolic intermediate biosynthesis; (R)-mevalonate biosynthesis; (R)-mevalonate from acetyl-CoA: step 1/3. Its function is as follows. Catalyzes the condensation of two acetyl-coA molecules into acetoacetyl-CoA. Functions in the mevalonate (MVA) pathway leading to isopentenyl diphosphate (IPP), a key precursor for the biosynthesis of isoprenoid compounds that are building blocks of archaeal membrane lipids. This is Acetyl-CoA acetyltransferase from Methanothermococcus thermolithotrophicus (Methanococcus thermolithotrophicus).